We begin with the raw amino-acid sequence, 522 residues long: 2-isopropylmalate synthase (522 aa).

The 263-residue stretch at 5–267 (VIIFDTTLRD…YTNINAREIH (263 aa)) folds into the Pyruvate carboxyltransferase domain. 4 residues coordinate Mn(2+): D14, H202, H204, and N238. The regulatory domain stretch occupies residues 392–522 (VMEQLVVQSD…MQQTRELGGV (131 aa)).

Belongs to the alpha-IPM synthase/homocitrate synthase family. LeuA type 1 subfamily. As to quaternary structure, homodimer. Mn(2+) is required as a cofactor.

The protein localises to the cytoplasm. It carries out the reaction 3-methyl-2-oxobutanoate + acetyl-CoA + H2O = (2S)-2-isopropylmalate + CoA + H(+). It participates in amino-acid biosynthesis; L-leucine biosynthesis; L-leucine from 3-methyl-2-oxobutanoate: step 1/4. In terms of biological role, catalyzes the condensation of the acetyl group of acetyl-CoA with 3-methyl-2-oxobutanoate (2-ketoisovalerate) to form 3-carboxy-3-hydroxy-4-methylpentanoate (2-isopropylmalate). The chain is 2-isopropylmalate synthase from Shewanella amazonensis (strain ATCC BAA-1098 / SB2B).